The primary structure comprises 1765 residues: Sodium channel protein type 11 subunit alpha (1765 aa).

Over 1-126 the chain is Cytoplasmic; sequence MEERYYPVIF…PIRSFMIRIS (126 aa). Residues 115–406 form an I repeat; it reads FNPIRSFMIR…VTMAYEEQNR (292 aa). A helical membrane pass occupies residues 127-148; it reads VHSVFSMFIICTVIINCMFMAN. Asparagine 149 is a glycosylation site (N-linked (GlcNAc...) asparagine). At 149 to 159 the chain is on the extracellular side; it reads NSSVDSRPSSN. The chain crosses the membrane as a helical span at residues 160–179; it reads IPEYVFIGIYVLEAVIKILA. The Cytoplasmic segment spans residues 180–191; sequence RGFIVDEFSYLR. The chain crosses the membrane as a helical span at residues 192-211; the sequence is DPWNWLDFIVIGTAIAPCFL. Over 212–219 the chain is Extracellular; the sequence is GNKVNNLS. The N-linked (GlcNAc...) asparagine glycan is linked to asparagine 217. A helical; Voltage-sensor transmembrane segment spans residues 220–239; the sequence is TLRTFRVLRALKAISVISGL. Topologically, residues 240–255 are cytoplasmic; sequence KVIVGALLRSVKKLVD. A helical membrane pass occupies residues 256–269; it reads VMVLTLFCLSIFAL. Over 270–342 the chain is Extracellular; sequence VGQQLFMGIL…PDYNYTNFDS (73 aa). A disulfide bridge links cysteine 283 with cysteine 320. Asparagine 303, asparagine 327, and asparagine 336 each carry an N-linked (GlcNAc...) asparagine glycan. Positions 343-367 form an intramembrane region, pore-forming; it reads FGWSFLAMFRVMTQDSWEKLYRQIL. Over 368–374 the chain is Extracellular; sequence RTSGIYF. A helical transmembrane segment spans residues 375 to 400; sequence VFFFVVVIFLGSFYLLNLTLAVVTMA. The Cytoplasmic segment spans residues 401 to 570; the sequence is YEEQNRNVAA…WLCIKKVLQT (170 aa). The tract at residues 470-490 is disordered; sequence RGSKTARASASDSEDDASKNP. Residues 557–821 form an II repeat; it reads CSPPWLCIKK…EGETRKTKVQ (265 aa). A helical transmembrane segment spans residues 571 to 594; the sequence is IMTDPFTELAITICIIVNTVFLAM. Residues 595–605 are Extracellular-facing; that stretch reads EHHNMDNSLKD. Residues 606–629 form a helical membrane-spanning segment; that stretch reads ILKIGNWVFTGIFIAEMCLKIIAL. Residues 630–637 are Cytoplasmic-facing; it reads DPYHYFRH. The chain crosses the membrane as a helical span at residues 638 to 659; that stretch reads GWNIFDSIVALVSLADVLFHKL. Over 660 to 664 the chain is Extracellular; the sequence is SKNLS. An N-linked (GlcNAc...) asparagine glycan is attached at asparagine 662. Residues 665-684 form a helical; Voltage-sensor membrane-spanning segment; sequence FLASLRVLRVFKLAKSWPTL. At 685 to 699 the chain is on the cytoplasmic side; sequence NTLIKIIGHSVGALG. The helical transmembrane segment at 700–722 threads the bilayer; sequence NLTVVLTIVVFIFSVVGMRLFGA. At 723-742 the chain is on the extracellular side; it reads KFNKTCSTSPESLRRWHMGD. N-linked (GlcNAc...) asparagine glycosylation is present at asparagine 725. An intramembrane region (pore-forming) is located at residues 743–763; sequence FYHSFLVVFRILCGEWIENMW. The Extracellular segment spans residues 764–773; it reads ECMQEMEGSP. Cysteine 765 and cysteine 775 form a disulfide bridge. Residues 774 to 799 form a helical membrane-spanning segment; it reads LCVIVFVLIMVVGKLVVLNLFIALLL. At 800–1030 the chain is on the cytoplasmic side; sequence NSFSNEEKDG…WWNLRKTCYQ (231 aa). The tract at residues 850-869 is disordered; it reads NSPKPNEATESFAGESRDTA. The stretch at 1023-1320 is one III repeat; it reads NLRKTCYQIV…KKYYNAMKKL (298 aa). The helical transmembrane segment at 1031-1053 threads the bilayer; it reads IVKHSWFESFIIFVILLSSGALI. Residues 1054 to 1067 lie on the Extracellular side of the membrane; that stretch reads FEDVNLPSRPQVEK. The helical transmembrane segment at 1068–1093 threads the bilayer; it reads LLKCTDNIFTFIFLLEMILKWVAFGF. Over 1094-1099 the chain is Cytoplasmic; sequence RKYFTS. A helical membrane pass occupies residues 1100–1117; sequence AWCWLDFLIVVVSGLSLT. Position 1118 (asparagine 1118) is a topological domain, extracellular. A helical; Voltage-sensor transmembrane segment spans residues 1119-1140; that stretch reads LPNLKSFRNLRALRPLRALSQF. Residues 1141–1159 are Cytoplasmic-facing; sequence EGMKVVVNALMSAIPAILN. Residues 1160 to 1181 form a helical membrane-spanning segment; the sequence is VLLVCLIFWLIFCILGVNFFSG. The Extracellular segment spans residues 1182–1224; the sequence is KFGRCINGTDINKYFNASNVPNQSQCLVSNYTWKVPNVNFDNV. Asparagine 1188, asparagine 1197, asparagine 1203, and asparagine 1211 each carry an N-linked (GlcNAc...) asparagine glycan. Residues 1225–1246 constitute an intramembrane region (pore-forming); the sequence is GNAYLALLQVATYKGWLDIMNA. The Extracellular segment spans residues 1247–1262; it reads AVDSRGKDEQPAFEAN. Residues 1263–1289 form a helical membrane-spanning segment; the sequence is LYAYLYFVVFIIFGSFFTLNLFIGVII. At 1290 to 1342 the chain is on the cytoplasmic side; that stretch reads DNFNQQQKKLGGQDIFMTEEQKKYYNAMKKLGTKKPQKPIPRPLNKCQAFVFD. One copy of the IV repeat lies at 1329 to 1619; that stretch reads IPRPLNKCQA…WEKFDPEATQ (291 aa). A helical transmembrane segment spans residues 1343-1366; it reads LVTSQVFDVIILGLIVTNMIIMMA. At 1367–1377 the chain is on the extracellular side; it reads ESEGQPNEVKK. The chain crosses the membrane as a helical span at residues 1378-1401; it reads IFDILNIVFVVIFTVECLIKVFAL. Topologically, residues 1402–1407 are cytoplasmic; it reads RQHYFT. A helical transmembrane segment spans residues 1408 to 1431; it reads NGWNLFDCVVVVLSIISTLVSGLE. The Extracellular segment spans residues 1432 to 1440; the sequence is NSNVFPPTL. Residues 1441-1463 traverse the membrane as a helical; Voltage-sensor segment; it reads FRIVRLARIGRILRLVRAARGIR. Over 1464–1478 the chain is Cytoplasmic; sequence TLLFALMMSLPSLFN. A helical membrane pass occupies residues 1479 to 1501; that stretch reads IGLLLFLVMFIYAIFGMNWFSKV. Residues 1502-1515 are Extracellular-facing; it reads KRGSGIDDIFNFDT. The segment at residues 1516–1538 is an intramembrane region (pore-forming); that stretch reads FSGSMLCLFQITTSAGWDALLNP. Over 1539–1559 the chain is Extracellular; that stretch reads MLESKASCNSSSQESCQQPQI. Residues 1560–1584 form a helical membrane-spanning segment; that stretch reads AIVYFVSYIIISFLIVVNMYIAVIL. At 1585 to 1765 the chain is on the cytoplasmic side; that stretch reads ENFNTATEES…DVPKIKVHCD (181 aa).

This sequence belongs to the sodium channel (TC 1.A.1.10) family. Nav1.9/SCN11A subfamily. The voltage-resistant sodium channel consists of an ion conducting pore forming alpha-subunit regulated by one or more auxiliary subunits SCN1B, SCN2B and SCN3B. Expressed in the dorsal root ganglia (C-fiber neurons), spinal cord, trigeminal ganglia, testis, ovary, uterus and small intestine.

It localises to the cell membrane. The enzyme catalyses Na(+)(in) = Na(+)(out). Sodium channel mediating the voltage-dependent sodium ion permeability of excitable membranes. Assuming opened or closed conformations in response to the voltage difference across the membrane, the protein forms a sodium-selective channel through which sodium ions may pass in accordance with their electrochemical gradient. Involved in membrane depolarization during action potential in nociceptors which function as key relay stations for the electrical transmission of pain signals from the periphery to the central nervous system. Also involved in rapid BDNF-evoked neuronal depolarization. The sequence is that of Sodium channel protein type 11 subunit alpha from Mus musculus (Mouse).